We begin with the raw amino-acid sequence, 293 residues long: Meteorin (293 aa).

The signal sequence occupies residues 1-23 (MGFPAAALLCALCCGLLAPAARA). 5 disulfide bridges follow: cysteine 30–cysteine 51, cysteine 82–cysteine 118, cysteine 171–cysteine 242, cysteine 174–cysteine 266, and cysteine 184–cysteine 288.

Belongs to the meteorin family. As to quaternary structure, monomer.

The protein resides in the secreted. Its function is as follows. Involved in both glial cell differentiation and axonal network formation during neurogenesis. Promotes astrocyte differentiation and transforms cerebellar astrocytes into radial glia. Also induces axonal extension in small and intermediate neurons of sensory ganglia by activating nearby satellite glia. This chain is Meteorin (METRN), found in Homo sapiens (Human).